Here is a 582-residue protein sequence, read N- to C-terminus: Tetratricopeptide repeat protein 24 (582 aa).

The segment at 1 to 31 (MSSPNPEDVPRRPEPEPSSSNKKKKKRKWLR) is disordered. TPR repeat units follow at residues 36–69 (IQAL…ASKA), 79–112 (QACA…EKAQ), 117–150 (GDQC…YQPQ), 154–187 (GEAW…YAQE), 236–271 (GHLY…VPGE), 273–306 (ATVL…HGSV), 313–346 (GRSF…ARDS), and 353–386 (WQAC…CQKE). 2 disordered regions span residues 418–481 (TSAP…RAGP) and 548–582 (VPNG…CTIV). The span at 441–454 (GSSTAGVQHRSSSG) shows a compositional bias: polar residues. Residues 462–472 (EGHQKKKEERS) are compositionally biased toward basic and acidic residues.

This chain is Tetratricopeptide repeat protein 24 (TTC24), found in Homo sapiens (Human).